Consider the following 238-residue polypeptide: Uridylate kinase (238 aa).

12–15 (KLSG) contacts ATP. A UMP-binding site is contributed by Gly-54. 2 residues coordinate ATP: Gly-55 and Arg-59. UMP contacts are provided by residues Asp-74 and 135 to 142 (TGNPFFTT). ATP contacts are provided by Thr-162, Tyr-168, and Asp-171.

The protein belongs to the UMP kinase family. In terms of assembly, homohexamer.

Its subcellular location is the cytoplasm. It catalyses the reaction UMP + ATP = UDP + ADP. Its pathway is pyrimidine metabolism; CTP biosynthesis via de novo pathway; UDP from UMP (UMPK route): step 1/1. Inhibited by UTP. Catalyzes the reversible phosphorylation of UMP to UDP. This chain is Uridylate kinase, found in Bordetella pertussis (strain Tohama I / ATCC BAA-589 / NCTC 13251).